The following is a 330-amino-acid chain: tRNA-modifying protein YgfZ (330 aa).

Folate contacts are provided by tryptophan 28 and tryptophan 190.

Belongs to the tRNA-modifying YgfZ family.

It is found in the cytoplasm. In terms of biological role, folate-binding protein involved in regulating the level of ATP-DnaA and in the modification of some tRNAs. It is probably a key factor in regulatory networks that act via tRNA modification, such as initiation of chromosomal replication. This chain is tRNA-modifying protein YgfZ, found in Serratia proteamaculans (strain 568).